We begin with the raw amino-acid sequence, 199 residues long: Imidazole glycerol phosphate synthase subunit HisH 2 (199 aa).

The Glutamine amidotransferase type-1 domain maps to 1-199; sequence MIAVIDVSGN…NNFLSLESKC (199 aa). The active-site Nucleophile is the Cys-76. Residues His-177 and Glu-179 contribute to the active site.

Heterodimer of HisH and HisF.

The protein resides in the cytoplasm. The catalysed reaction is 5-[(5-phospho-1-deoxy-D-ribulos-1-ylimino)methylamino]-1-(5-phospho-beta-D-ribosyl)imidazole-4-carboxamide + L-glutamine = D-erythro-1-(imidazol-4-yl)glycerol 3-phosphate + 5-amino-1-(5-phospho-beta-D-ribosyl)imidazole-4-carboxamide + L-glutamate + H(+). It catalyses the reaction L-glutamine + H2O = L-glutamate + NH4(+). It functions in the pathway amino-acid biosynthesis; L-histidine biosynthesis; L-histidine from 5-phospho-alpha-D-ribose 1-diphosphate: step 5/9. Its function is as follows. IGPS catalyzes the conversion of PRFAR and glutamine to IGP, AICAR and glutamate. The HisH subunit provides the glutamine amidotransferase activity that produces the ammonia necessary to HisF for the synthesis of IGP and AICAR. In Legionella pneumophila (strain Lens), this protein is Imidazole glycerol phosphate synthase subunit HisH 2.